Reading from the N-terminus, the 40-residue chain is Amyloid-beta precursor protein (40 aa).

The protein belongs to the APP family. As to quaternary structure, binds, via its C-terminus, to the PID domain of several cytoplasmic proteins, including APBB family members, the APBA family, MAPK8IP1, SHC1 and NUMB and DAB1. Binding to DAB1 inhibits its serine phosphorylation. Interacts (via NPXY motif) with DAB2 (via PID domain); the interaction is impaired by tyrosine phosphorylation of the NPXY motif. Also interacts with GPCR-like protein BPP, APPBP1, IB1, KNS2 (via its TPR domains), APPBP2 (via BaSS) and DDB1. In vitro, it binds MAPT via the MT-binding domains. Associates with microtubules in the presence of ATP and in a kinesin-dependent manner. Interacts, through a C-terminal domain, with GNAO1. Interacts with CPEB1, ANKS1B and AGER. Interacts with ITM2B. Interacts with ITM2C. Interacts with IDE. Can form homodimers; dimerization is enhanced in the presence of Cu(2+) ions. Can form homodimers; this is promoted by heparin binding. Interacts with SORL1 (via N-terminal ectodomain); this interaction retains APP in the trans-Golgi network and reduces processing into soluble APP-alpha and amyloid-beta peptides. Interacts with PLD3. Interacts with VDAC1. Interacts with NSG1; could regulate APP processing. Interacts with LRRK2. Interacts (via cytoplasmic domain) with KIF5B. Interacts (via C-terminus) with APBB2/FE65L1 (via C-terminus). Interacts (via intracellular domain) with APBB3. Post-translationally, proteolytically processed under normal cellular conditions. Cleavage either by alpha-secretase, beta-secretase or theta-secretase leads to generation and extracellular release of soluble APP peptides, S-APP-alpha and S-APP-beta, and the retention of corresponding membrane-anchored C-terminal fragments, C80, C83 and C99. Subsequent processing of C80 and C83 by gamma-secretase yields P3 peptides. This is the major secretory pathway and is non-amyloidogenic. Alternatively, presenilin/nicastrin-mediated gamma-secretase processing of C99 releases the amyloid-beta proteins, amyloid-beta protein 40 and amyloid-beta protein 42, major components of amyloid plaques, and the cytotoxic C-terminal fragments, gamma-CTF(50), gamma-CTF(57) and gamma-CTF(59). PSEN1 cleavage is more efficient with C83 than with C99 as substrate (in vitro). Amyloid-beta protein 40 and Amyloid-beta protein 42 are cleaved by ACE. Many other minor amyloid-beta peptides, amyloid-beta 1-X peptides, are found in cerebral spinal fluid (CSF) including the amyloid-beta X-15 peptides, produced from the cleavage by alpha-secretase.

The protein localises to the cell membrane. Its subcellular location is the membrane. It localises to the perikaryon. It is found in the cell projection. The protein resides in the growth cone. The protein localises to the clathrin-coated pit. Its subcellular location is the early endosome. It localises to the cytoplasmic vesicle. Functions as a cell surface receptor and performs physiological functions on the surface of neurons relevant to neurite growth, neuronal adhesion and axonogenesis. Interaction between APP molecules on neighboring cells promotes synaptogenesis. Involved in cell mobility and transcription regulation through protein-protein interactions. Can promote transcription activation through binding to APBB1-KAT5 and inhibit Notch signaling through interaction with Numb. Couples to apoptosis-inducing pathways such as those mediated by G(o) and JIP. Inhibits G(o)-alpha ATPase activity. Acts as a kinesin I membrane receptor, mediating the axonal transport of beta-secretase and presenilin 1. May be involved in copper homeostasis/oxidative stress through copper ion reduction. In vitro, copper-metallated APP induces neuronal death directly or is potentiated through Cu(2+)-mediated low-density lipoprotein oxidation. Can regulate neurite outgrowth through binding to components of the extracellular matrix such as heparin and collagen I and IV. Induces a AGER-dependent pathway that involves activation of p38 MAPK, resulting in internalization of amyloid-beta peptide and mitochondrial dysfunction in cultured cortical neurons. Provides Cu(2+) ions for GPC1 which are required for release of nitric oxide (NO) and subsequent degradation of the heparan sulfate chains on GPC1. The protein is Amyloid-beta precursor protein of Felis catus (Cat).